We begin with the raw amino-acid sequence, 260 residues long: Dehydrogenase/reductase SDR family member 4 (260 aa).

14–38 lines the NADP(+) pocket; it reads IVTAATKGIGLAIAERLLDEGASVV. Ser-148 is a binding site for substrate. Tyr-161 acts as the Proton acceptor in catalysis. Lys-165 contacts NADP(+).

It belongs to the short-chain dehydrogenases/reductases (SDR) family.

It catalyses the reaction a secondary alcohol + NADP(+) = a ketone + NADPH + H(+). Functionally, catalyzes the reduction of isatin, 4-oxonon-2-enal, 9,10-phenanthrenequinone, menadione, 2,3-hexaenadione, 3,4-hexanedione and 2,3-heptanedione. The protein is Dehydrogenase/reductase SDR family member 4 of Caenorhabditis elegans.